Reading from the N-terminus, the 289-residue chain is ATP synthase gamma chain (289 aa).

It belongs to the ATPase gamma chain family. As to quaternary structure, F-type ATPases have 2 components, CF(1) - the catalytic core - and CF(0) - the membrane proton channel. CF(1) has five subunits: alpha(3), beta(3), gamma(1), delta(1), epsilon(1). CF(0) has three main subunits: a, b and c.

The protein resides in the cell inner membrane. Produces ATP from ADP in the presence of a proton gradient across the membrane. The gamma chain is believed to be important in regulating ATPase activity and the flow of protons through the CF(0) complex. In Haemophilus influenzae (strain ATCC 51907 / DSM 11121 / KW20 / Rd), this protein is ATP synthase gamma chain.